We begin with the raw amino-acid sequence, 536 residues long: Lysosomal acid glucosylceramidase (536 aa).

The signal sequence occupies residues 1–39 (MEFSSPSREECPKPLSRVSIMAGSLTGLLLLQAVSWASG). Disulfide bonds link Cys43–Cys55 and Cys57–Cys62. Asn58, Asn98, and Asn185 each carry an N-linked (GlcNAc...) asparagine glycan. Glu274 acts as the Proton donor in catalysis. The N-linked (GlcNAc...) asparagine glycan is linked to Asn309. Catalysis depends on Glu379, which acts as the Nucleophile. A glycan (N-linked (GlcNAc...) asparagine) is linked at Asn501.

This sequence belongs to the glycosyl hydrolase 30 family. Interacts with saposin-C. Interacts with SCARB2. Interacts with TCP1. May interacts with SNCA; this interaction may inhibit the glucosylceramidase activity. Interacts with GRN; this interaction prevents aggregation of GBA1-SCARB2 complex via interaction with HSPA1A upon stress.

It localises to the lysosome membrane. The enzyme catalyses a beta-D-glucosyl-(1&lt;-&gt;1')-N-acylsphing-4-enine + H2O = an N-acylsphing-4-enine + D-glucose. It carries out the reaction a beta-D-galactosyl-(1&lt;-&gt;1')-N-acylsphing-4-enine + H2O = an N-acylsphing-4-enine + D-galactose. It catalyses the reaction cholesteryl 3-beta-D-glucoside + H2O = cholesterol + D-glucose. The catalysed reaction is a beta-D-glucosyl-(1&lt;-&gt;1')-N-acylsphing-4-enine + cholesterol = cholesteryl 3-beta-D-glucoside + an N-acylsphing-4-enine. The enzyme catalyses beta-D-glucosyl-N-(9Z-octadecenoyl)-sphing-4E-enine + cholesterol = N-(9Z-octadecenoyl)-sphing-4-enine + cholesteryl 3-beta-D-glucoside. It carries out the reaction beta-D-glucosyl-(1&lt;-&gt;1')-N-hexadecanoylsphing-4-enine + cholesterol = cholesteryl 3-beta-D-glucoside + N-hexadecanoylsphing-4-enine. It catalyses the reaction beta-D-glucosyl-N-octanoylsphing-4E-enine + cholesterol = N-octanoylsphing-4-enine + cholesteryl 3-beta-D-glucoside. The catalysed reaction is beta-D-glucosyl-N-dodecanoylsphing-4-enine + cholesterol = N-dodecanoylsphing-4-enine + cholesteryl 3-beta-D-glucoside. The enzyme catalyses beta-D-glucosyl-(1&lt;-&gt;1)-N-octadecanoylsphing-4-enine + cholesterol = N-octadecanoylsphing-4-enine + cholesteryl 3-beta-D-glucoside. It carries out the reaction beta-D-glucosyl-(1&lt;-&gt;1')-N-(15Z-tetracosenoyl)-sphing-4-enine + cholesterol = N-(15Z-tetracosenoyl)-sphing-4-enine + cholesteryl 3-beta-D-glucoside. It catalyses the reaction a beta-D-galactosyl-(1&lt;-&gt;1')-N-acylsphing-4-enine + cholesterol = cholesteryl 3-beta-D-galactoside + an N-acylsphing-4-enine. The catalysed reaction is 1-(beta-D-galactosyl)-N-dodecanoylsphing-4-enine + cholesterol = cholesteryl 3-beta-D-galactoside + N-dodecanoylsphing-4-enine. The enzyme catalyses a beta-D-xylosyl-(1&lt;-&gt;1')-N-acylsphing-4-enine + cholesterol = cholesteryl 3-beta-D-xyloside + an N-acylsphing-4-enine. It carries out the reaction beta-D-xylosyl-(1&lt;-&gt;1')-N-(9Z-octadecenoyl)-sphing-4-enine + cholesterol = cholesteryl 3-beta-D-xyloside + N-(9Z-octadecenoyl)-sphing-4-enine. It participates in steroid metabolism; cholesterol metabolism. It functions in the pathway sphingolipid metabolism. Synergistically activated by saposin-A and saposin-C, two saposin peptides produced by proteolytic processing of prosaposin/PSAP. Saposin-C activates GBA1 through its recruitment to membranes. The membrane structure and composition in anionic phospholipids are also important for the activation. Activated by PKC in the salvage pathway of ceramide formation. Inhibited by conduritol B epoxide/CBE. In terms of biological role, glucosylceramidase that catalyzes, within the lysosomal compartment, the hydrolysis of glucosylceramides/GlcCers (such as beta-D-glucosyl-(1&lt;-&gt;1')-N-acylsphing-4-enine) into free ceramides (such as N-acylsphing-4-enine) and glucose. Plays a central role in the degradation of complex lipids and the turnover of cellular membranes. Through the production of ceramides, participates in the PKC-activated salvage pathway of ceramide formation. Catalyzes the glucosylation of cholesterol, through a transglucosylation reaction where glucose is transferred from GlcCer to cholesterol. GlcCer containing mono-unsaturated fatty acids (such as beta-D-glucosyl-N-(9Z-octadecenoyl)-sphing-4-enine) are preferred as glucose donors for cholesterol glucosylation when compared with GlcCer containing same chain length of saturated fatty acids (such as beta-D-glucosyl-N-octadecanoyl-sphing-4-enine). Under specific conditions, may alternatively catalyze the reverse reaction, transferring glucose from cholesteryl 3-beta-D-glucoside to ceramide. Can also hydrolyze cholesteryl 3-beta-D-glucoside producing glucose and cholesterol. Catalyzes the hydrolysis of galactosylceramides/GalCers (such as beta-D-galactosyl-(1&lt;-&gt;1')-N-acylsphing-4-enine), as well as the transfer of galactose between GalCers and cholesterol in vitro, but with lower activity than with GlcCers. Contrary to GlcCer and GalCer, xylosylceramide/XylCer (such as beta-D-xyosyl-(1&lt;-&gt;1')-N-acylsphing-4-enine) is not a good substrate for hydrolysis, however it is a good xylose donor for transxylosylation activity to form cholesteryl 3-beta-D-xyloside. This chain is Lysosomal acid glucosylceramidase, found in Homo sapiens (Human).